Here is a 402-residue protein sequence, read N- to C-terminus: Acetate kinase (402 aa).

N10 is a Mg(2+) binding site. K17 is an ATP binding site. Residue R89 coordinates substrate. Catalysis depends on D148, which acts as the Proton donor/acceptor. ATP contacts are provided by residues 208–212, 283–285, and 334–338; these read HLGNG, DCR, and GIGEN. E389 provides a ligand contact to Mg(2+).

Belongs to the acetokinase family. Homodimer. Mg(2+) serves as cofactor. The cofactor is Mn(2+).

The protein resides in the cytoplasm. It catalyses the reaction acetate + ATP = acetyl phosphate + ADP. The protein operates within metabolic intermediate biosynthesis; acetyl-CoA biosynthesis; acetyl-CoA from acetate: step 1/2. Its function is as follows. Catalyzes the formation of acetyl phosphate from acetate and ATP. Can also catalyze the reverse reaction. The polypeptide is Acetate kinase (Actinobacillus pleuropneumoniae serotype 5b (strain L20)).